A 145-amino-acid polypeptide reads, in one-letter code: Polytheonamide B (145 aa).

Positions 1–96 (MADSDNTPTS…DDDLDQAAGG (96 aa)) are excised as a propeptide. Residue threonine 97 is modified to 2-oxo-5,5-dimethylhexanoate. 3-methylisoleucine is present on isoleucine 99. Valine 101 is subject to 3-methylvaline. 3-methyl-D-valine is present on valine 102. Valine 103 is modified (3-methylvaline). Alanine 104 carries the D-alanine (Ala) modification. Position 105 is a 3-methylvaline (valine 105). Residues valine 106 and valine 110 each carry the 3-methyl-D-valine modification. The residue at position 112 (asparagine 112) is an N4-methyl-D-asparagine. Threonine 113 carries the 3-hydroxyvaline (Thr) modification. The residue at position 117 (valine 117) is a 3-methylvaline. Asparagine 118 is modified (N4-methyl-D-asparagine). Residue glutamine 119 is modified to (3S)-3-methylglutamine. At valine 120 the chain carries 3-hydroxy-D-valine. The residue at position 124 (asparagine 124) is an N4-methyl-D-asparagine. Residue asparagine 126 is modified to (3R)-N4-methyl-3-hydroxy-D-asparagine. Position 127 is a 3-methylvaline (valine 127). Valine 128 is modified (3-hydroxy-D-valine). N4-methyl-D-asparagine is present on residues asparagine 130 and asparagine 132. Asparagine 134 is modified ((3R)-N4-methyl-3-hydroxy-D-asparagine). Asparagine 136 carries the N4-methyl-D-asparagine modification. Position 138 is a D-serine (Ser) (serine 138). Asparagine 140 bears the D-asparagine mark. Position 141 is a 3,3-dimethylmethionine (methionine 141). The residue at position 142 (asparagine 142) is a D-asparagine. The residue at position 144 (threonine 144) is a D-threonine.

In terms of processing, epimerization of most, and perhaps all, L- to D-amino acids is catalyzed by PoyD, when PoyA and PoyD are coexpressed in E.coli. N-methylations are catalyzed by PoyE, when PoyA and PoyE are coexpressed in E.coli. Post-translationally, to obtain 2-oxo-5,5-dimethylhexanoate, Thr-97 is firstly dehydrated by PoyF. The second step possibly corresponds to methylation by PoyB/C, and the third step may be a cleavage by PoyH/J.

Antimicrobial peptide active against Gram-positive bacteria (MIC=4-&gt;125 ug/ml). May act by forming transmembrane ion channels, since the peptide rapidly depolarizes the bacterial cytoplasmic membrane, simultaneously decreasing the membrane potential and intracellular potassium contents. The polypeptide is Polytheonamide B (Bacterium symbiont subsp. Theonella swinhoei (strain pTSMAC1)).